The following is a 232-amino-acid chain: Ribonuclease P protein component 3 (232 aa).

The protein belongs to the eukaryotic/archaeal RNase P protein component 3 family. Consists of a catalytic RNA component and at least 4-5 protein subunits. Forms a subcomplex with Rnp2 which stimulates the catalytic RNA.

The protein resides in the cytoplasm. It carries out the reaction Endonucleolytic cleavage of RNA, removing 5'-extranucleotides from tRNA precursor.. Functionally, part of ribonuclease P, a protein complex that generates mature tRNA molecules by cleaving their 5'-ends. This is Ribonuclease P protein component 3 from Methanocaldococcus jannaschii (strain ATCC 43067 / DSM 2661 / JAL-1 / JCM 10045 / NBRC 100440) (Methanococcus jannaschii).